The sequence spans 579 residues: MNQMRNGDLGSESFGTCLLLSLPEDVIAVIARFVSPRDICNLSLCCKSLCDVVDSERIWLVQCEVVKVLPLSEIIQWRIGISSYKALCWFLGEVMKPLVGVWVHQNPELGNVVYVMPGFLSVVGCRIIPQEVGPLGIEEARVMWSPVFEIICGFDGSAKFFLHGRDGKVQCCLHPGFVRGIEKSCNVLLLEVETRREKKLCNEIDETVLLVETGVQLPFRKLPFSYRRNLLHIVTSTVGIPVPDLSSEKLFPTSKDDEAVLLERRTMLLKMHKFGGDWNHMNLEDECTNIPNQVDINKSWKHLGFEGDIRNMDAENQTQRKSFSRYFRSGIKHILGRSSSSKNMSSSRSETRPLNLQKFLNFGDSIGLSLKASNIKLSSYQGWPNMDETRYALYKLPIKDPIANDEYAGLWGGTFGWPPGKCTEDKPGKAFFLLMLSYEESQDGTERLLIGTKILEGTHYGMHPNGSAMFVIKIDSPSFEGFPFDTNGEDFEHSYAGEGTAKGYGFRYPGYKPGTLFVTSKGLLMFIWKATKAVLTLQRLNLGELLRKGVCVSPLPPCLNFAYLIKCHTNVFAPERRRS.

The F-box domain maps to 16 to 62 (TCLLLSLPEDVIAVIARFVSPRDICNLSLCCKSLCDVVDSERIWLVQ).

This Arabidopsis thaliana (Mouse-ear cress) protein is F-box protein At5g39450.